We begin with the raw amino-acid sequence, 2020 residues long: Metacaspase-2 (2020 aa).

Composition is skewed to basic and acidic residues over residues 51–60 (SENDRNESIQ) and 69–78 (DNRKTNKSEK). Disordered stretches follow at residues 51–78 (SEND…KSEK) and 573–614 (RNGN…NINN). Low complexity predominate over residues 576-614 (NINNNKNNNINNNNNNINNNNNNINNNNNNINNNNNINN).

Belongs to the peptidase C14B family.

It localises to the cytoplasm. With respect to regulation, ca(2+) does not appear to affect catalytic activity. Its function is as follows. Protease that cleaves specifically after arginine or lysine residues. May play a role in parasite growth and/or development. The polypeptide is Metacaspase-2 (Plasmodium falciparum (isolate 3D7)).